A 245-amino-acid chain; its full sequence is 1-(5-phosphoribosyl)-5-[(5-phosphoribosylamino)methylideneamino] imidazole-4-carboxamide isomerase (245 aa).

The active-site Proton acceptor is aspartate 8. Aspartate 130 (proton donor) is an active-site residue.

Belongs to the HisA/HisF family.

It is found in the cytoplasm. The enzyme catalyses 1-(5-phospho-beta-D-ribosyl)-5-[(5-phospho-beta-D-ribosylamino)methylideneamino]imidazole-4-carboxamide = 5-[(5-phospho-1-deoxy-D-ribulos-1-ylimino)methylamino]-1-(5-phospho-beta-D-ribosyl)imidazole-4-carboxamide. It functions in the pathway amino-acid biosynthesis; L-histidine biosynthesis; L-histidine from 5-phospho-alpha-D-ribose 1-diphosphate: step 4/9. The protein is 1-(5-phosphoribosyl)-5-[(5-phosphoribosylamino)methylideneamino] imidazole-4-carboxamide isomerase of Azotobacter vinelandii (strain DJ / ATCC BAA-1303).